Consider the following 396-residue polypeptide: tRNA-specific 2-thiouridylase MnmA (396 aa).

Residues 42-49 (GMSGGVDS) and Met68 each bind ATP. The tract at residues 128–130 (NPD) is interaction with target base in tRNA. The active-site Nucleophile is the Cys133. The cysteines at positions 133 and 230 are disulfide-linked. Gly158 contributes to the ATP binding site. The segment at 180-182 (KDQ) is interaction with tRNA. Cys230 (cysteine persulfide intermediate) is an active-site residue. The interaction with tRNA stretch occupies residues 342 to 343 (RY).

This sequence belongs to the MnmA/TRMU family.

Its subcellular location is the cytoplasm. It catalyses the reaction S-sulfanyl-L-cysteinyl-[protein] + uridine(34) in tRNA + AH2 + ATP = 2-thiouridine(34) in tRNA + L-cysteinyl-[protein] + A + AMP + diphosphate + H(+). Catalyzes the 2-thiolation of uridine at the wobble position (U34) of tRNA, leading to the formation of s(2)U34. This chain is tRNA-specific 2-thiouridylase MnmA, found in Pseudoalteromonas atlantica (strain T6c / ATCC BAA-1087).